The primary structure comprises 131 residues: MSMSDPIADMLTRIRNAQVVQKTSVAMPSSKVKIAIANVLKDEGYIEDFAVTEAAGKAELKIGLKYYAGRPVIERLERVSRPGLRIYKGKDDIPNVMNGLGVAIVSTPKGVMTDRKARATGVGGEVICYVA.

This sequence belongs to the universal ribosomal protein uS8 family. In terms of assembly, part of the 30S ribosomal subunit. Contacts proteins S5 and S12.

Functionally, one of the primary rRNA binding proteins, it binds directly to 16S rRNA central domain where it helps coordinate assembly of the platform of the 30S subunit. This chain is Small ribosomal subunit protein uS8, found in Janthinobacterium sp. (strain Marseille) (Minibacterium massiliensis).